Consider the following 79-residue polypeptide: Sec-independent protein translocase protein TatA (79 aa).

A helical membrane pass occupies residues 1–21 (MGGFTSIWHWVIVLLVIVLLF). The tract at residues 48–79 (EEEAKNEPKTLDAQVTQAKVHESSEIKNKQEG) is disordered. Residues 66–79 (KVHESSEIKNKQEG) are compositionally biased toward basic and acidic residues.

Belongs to the TatA/E family. The Tat system comprises two distinct complexes: a TatABC complex, containing multiple copies of TatA, TatB and TatC subunits, and a separate TatA complex, containing only TatA subunits. Substrates initially bind to the TatABC complex, which probably triggers association of the separate TatA complex to form the active translocon.

It localises to the cell inner membrane. Functionally, part of the twin-arginine translocation (Tat) system that transports large folded proteins containing a characteristic twin-arginine motif in their signal peptide across membranes. TatA could form the protein-conducting channel of the Tat system. The polypeptide is Sec-independent protein translocase protein TatA (Helicobacter acinonychis (strain Sheeba)).